Consider the following 89-residue polypeptide: Small ribosomal subunit protein uS15 (89 aa).

The protein belongs to the universal ribosomal protein uS15 family. Part of the 30S ribosomal subunit. Forms a bridge to the 50S subunit in the 70S ribosome, contacting the 23S rRNA.

In terms of biological role, one of the primary rRNA binding proteins, it binds directly to 16S rRNA where it helps nucleate assembly of the platform of the 30S subunit by binding and bridging several RNA helices of the 16S rRNA. Functionally, forms an intersubunit bridge (bridge B4) with the 23S rRNA of the 50S subunit in the ribosome. This Salinispora arenicola (strain CNS-205) protein is Small ribosomal subunit protein uS15.